A 139-amino-acid polypeptide reads, in one-letter code: Actin-depolymerizing factor 1 (139 aa).

One can recognise an ADF-H domain in the interval 5–139; the sequence is ASGMAVHDDC…DLDVFRSRAN (135 aa). At serine 6 the chain carries Phosphoserine; by CPK3.

The protein belongs to the actin-binding proteins ADF family. As to quaternary structure, interacts with the 14-3-3-like protein GRF6/AFT1. Post-translationally, phosphorylation at Ser-6 by CPK3/CDPK6 inhibits actin-depolimerizing activity. Expressed in vascular tissues of all organs.

It localises to the cytoplasm. It is found in the cytoskeleton. In terms of biological role, actin-depolymerizing protein. Stimulates F-actin depolymerization. Involved in plant development, cell organ expansion and flowering by controlling breakdown of thick actin cables. Severs actin filaments or bundles and promotes actin cytoskeleton disassembly. Binds monomeric actin (G-actin) with a marked preference for the ADP-loaded form and inhibits the rate of nucleotide exchange on G-actin. The sequence is that of Actin-depolymerizing factor 1 (ADF1) from Arabidopsis thaliana (Mouse-ear cress).